We begin with the raw amino-acid sequence, 218 residues long: Cell division protein SepF (218 aa).

A disordered region spans residues 25 to 115 (DVAASTDNVI…IANRREQYQQ (91 aa)). Residues 29-43 (STDNVIPRSQQSVRA) show a composition bias toward polar residues. Basic and acidic residues predominate over residues 47-63 (PKQEPRNNHVQQDHQAR). Residues 102–115 (STSSIANRREQYQQ) are compositionally biased toward polar residues.

It belongs to the SepF family. As to quaternary structure, homodimer. Interacts with FtsZ.

It localises to the cytoplasm. Its function is as follows. Cell division protein that is part of the divisome complex and is recruited early to the Z-ring. Probably stimulates Z-ring formation, perhaps through the cross-linking of FtsZ protofilaments. Its function overlaps with FtsA. This chain is Cell division protein SepF, found in Streptococcus pyogenes serotype M5 (strain Manfredo).